The sequence spans 577 residues: MWARDKCSVPQLEMDSRYTSATGIGDLNQLSAAIPATRVEVSVSCRNLLDRDTFSKSDPICVLYTQAVGNKEWREFGRTEVIDNTLNPDFVRKFILDYFFEERENLRFDLYDVDSKSPNLSKHDFLGQVFCTLGEIVGSQGSRLEKPIVGIPGRKCGTIILTAEELNCCRDAVLMQFCANKLDKKDFFGKSDPFLVFYRSNEDGSFTICHKTEVVKNTLNPVWQAFKISVRALCNGDYDRTIKVEVYDWDRDGSHDFIGEFTTSYRELARGQSQFNVYEVVNPKKKGKKKKYTNSGTVTLLSFLVETEVSFLDYIKGGTQINFTVAIDFTASNGNPAQPTSLHYMNPYQLNAYGMALKAVGEIVQDYDSDKMFPALGFGAKLPPDGRISHEFALNGNPQNPYCDGIEGVMEAYYRSLKSVQLYGPTNFAPVINHVARYASSVKDGSQYFVLLIVTDGVISDMAQTKESIVNASKLPMSIIIVGVGPAEFDAMVELDGDDVRVSSRGKYAERDIVQFVPFRDYIDRSGNHILSMARLAKDVLAEIPEQFLSYMRARGIKPSPAPPPYTPPTHVLQTQI.

C2 domains lie at 19-146 (TSAT…RLEK) and 155-278 (KCGT…FNVY). Ca(2+) is bound by residues Asp52, Asp58, Asp112, Asp114, Ser117, Lys122, Asp124, Asp186, Asp192, Asp248, Asp250, and Asp256. Ser273 bears the Phosphoserine mark. In terms of domain architecture, VWFA spans 322-523 (NFTVAIDFTA…VQFVPFRDYI (202 aa)).

Belongs to the copine family. Ca(2+) is required as a cofactor.

Its function is as follows. Probable calcium-dependent phospholipid-binding protein that may play a role in calcium-mediated intracellular processes. This is Copine-8 from Mus musculus (Mouse).